Consider the following 328-residue polypeptide: Cytochrome c biogenesis protein CcsA (328 aa).

8 helical membrane passes run 13-33 (ISFS…LVNL), 46-66 (GIVI…IYSG), 73-93 (LYES…VSYF), 101-121 (LNAI…SGLL), 146-166 (MVLG…LLVI), 234-254 (IISL…VWAN), 263-283 (WDPK…YLHI), and 295-315 (AIVA…VNLL).

Belongs to the CcmF/CycK/Ccl1/NrfE/CcsA family. As to quaternary structure, may interact with Ccs1.

It is found in the plastid. The protein localises to the chloroplast thylakoid membrane. Required during biogenesis of c-type cytochromes (cytochrome c6 and cytochrome f) at the step of heme attachment. The sequence is that of Cytochrome c biogenesis protein CcsA from Aethionema cordifolium (Lebanon stonecress).